Reading from the N-terminus, the 544-residue chain is Chaperonin GroEL 2 (544 aa).

Residues 29–32 (TLGP), 86–90 (DGTTT), glycine 413, 479–481 (NAA), and aspartate 495 each bind ATP.

This sequence belongs to the chaperonin (HSP60) family. Forms a cylinder of 14 subunits composed of two heptameric rings stacked back-to-back. Interacts with the co-chaperonin GroES.

It localises to the cytoplasm. It carries out the reaction ATP + H2O + a folded polypeptide = ADP + phosphate + an unfolded polypeptide.. Its function is as follows. Together with its co-chaperonin GroES, plays an essential role in assisting protein folding. The GroEL-GroES system forms a nano-cage that allows encapsulation of the non-native substrate proteins and provides a physical environment optimized to promote and accelerate protein folding. The protein is Chaperonin GroEL 2 of Prochlorococcus marinus (strain MIT 9515).